The chain runs to 345 residues: NADH-quinone oxidoreductase subunit 8 (345 aa).

8 helical membrane passes run 15 to 35, 82 to 102, 115 to 135, 161 to 181, 190 to 210, 240 to 262, 278 to 298, and 309 to 329; these read MLLQGLAVIAFVMGSLIFMVY, FVYFLAPFLSMMLALFAFVVI, VGILFIFAASSLEVYGVIMGG, LGLIIIGIIISTGSMNLTAIV, LLNWYWLPHLPMVVLFFVSAL, YLLFMAGEYIAMYLMCALLSLLF, WWMVIKMWFWFYMFAMVKAIV, and IGWKVFLPLSLGWVVLVAILA.

This sequence belongs to the complex I subunit 1 family. As to quaternary structure, NDH-1 is composed of at least 14 different subunits, Nqo1 to Nqo14. The complex has a L-shaped structure, with the hydrophobic arm (subunits Nqo7, Nqo8, Nqo10 to Nqo14) embedded in the inner membrane and the hydrophilic peripheral arm (subunits Nqo1 to Nqo6, Nqo9) protruding into the bacterial cytoplasm. The hydrophilic domain contains all the redox centers.

The protein resides in the cell inner membrane. The enzyme catalyses a quinone + NADH + 5 H(+)(in) = a quinol + NAD(+) + 4 H(+)(out). In terms of biological role, NDH-1 shuttles electrons from NADH, via FMN and iron-sulfur (Fe-S) centers, to quinones in the respiratory chain. The immediate electron acceptor for the enzyme in this species is believed to be ubiquinone. Couples the redox reaction to proton translocation (for every two electrons transferred, four hydrogen ions are translocated across the cytoplasmic membrane), and thus conserves the redox energy in a proton gradient. In Paracoccus denitrificans, this protein is NADH-quinone oxidoreductase subunit 8.